We begin with the raw amino-acid sequence, 1194 residues long: Chitin synthase C (1194 aa).

Disordered regions lie at residues 1-91 and 136-177; these read MSLP…PNYL and GAHG…RRKA. Residues 12–23 are compositionally biased toward basic and acidic residues; it reads PRREETSAFREP. The segment covering 42 to 54 has biased composition (basic residues); sequence PRHHRHHRSHSSR. 2 stretches are compositionally biased toward basic and acidic residues: residues 55 to 69 and 76 to 85; these read HQHD…EGGI and VKPERGRMDP. Positions 150–164 are enriched in basic residues; the sequence is TRHRSKKRKGSRKIS. A helical transmembrane segment spans residues 221–241; that stretch reads IGLISIILMIAAFVGFLTFGF. 2 N-linked (GlcNAc...) asparagine glycosylation sites follow: Asn351 and Asn390. A helical membrane pass occupies residues 476–496; sequence YVSLIFILSIVIVKFAFALLF. 4 N-linked (GlcNAc...) asparagine glycosylation sites follow: Asn582, Asn608, Asn885, and Asn1014. A run of 3 helical transmembrane segments spans residues 1039–1059, 1073–1093, and 1097–1117; these read FVIF…SFTI, IIPL…VVVT, and LVYV…NFVL.

It belongs to the chitin synthase family. Class V subfamily.

The protein resides in the cell membrane. The catalysed reaction is [(1-&gt;4)-N-acetyl-beta-D-glucosaminyl](n) + UDP-N-acetyl-alpha-D-glucosamine = [(1-&gt;4)-N-acetyl-beta-D-glucosaminyl](n+1) + UDP + H(+). Polymerizes chitin, a structural polymer of the cell wall and septum, by transferring the sugar moiety of UDP-GlcNAc to the non-reducing end of the growing chitin polymer. Responsible for synthesis of 30-40% of the chitin in the cells. ChsA and chsD play redundant functions in conidia formation. The chitin synthesized by the chsD-encoded isozyme contributes to the rigidity of the walls of germinating conidia, of the subapical region of hyphae, and of conidiophore vesicles, but is not necessary for normal morphology of these cells. In Emericella nidulans (strain FGSC A4 / ATCC 38163 / CBS 112.46 / NRRL 194 / M139) (Aspergillus nidulans), this protein is Chitin synthase C.